The chain runs to 750 residues: DDT domain-containing protein DDR4 (750 aa).

The segment at 1–125 is disordered; it reads MGSSSDIVPD…ITSLVPPPEP (125 aa). Over residues 45–54 the composition is skewed to low complexity; that stretch reads RAQQRLQELQ. Positions 55–77 are enriched in basic and acidic residues; the sequence is AAERKLKPPKKEYKREQHRRREE. Residues 78 to 100 show a composition bias toward acidic residues; the sequence is VVEEDEDSEDDDQEDEENDGDDE. Residues 133-192 enclose the DDT domain; sequence LRSMWELASVLNFLHVFRPLLKINAEFSAEEFETALLTPNDTLSDIHIPLLKAIPPVTRM. Disordered regions lie at residues 450–505 and 532–750; these read NGRS…TDFV and LKKR…TDNS. Residues 451 to 471 are compositionally biased toward polar residues; the sequence is GRSTSSTHPTEPVNDTASGRS. Positions 545–585 are enriched in acidic residues; it reads EGDEEKGDEEYKWDEDNAEYEEEEEEEEEEDSLSASEEDSD. The segment covering 595-606 has biased composition (basic and acidic residues); the sequence is RRETKLRSRSND. A compositionally biased stretch (polar residues) spans 688 to 707; the sequence is NADTTNGKENNQLNKSNGTT. Basic and acidic residues predominate over residues 741–750; that stretch reads LKDDDKTDNS.

Interacts (via the DDT domain) with CHR11 (via C-terminus).

The protein localises to the nucleus. Probable transcription regulator. The polypeptide is DDT domain-containing protein DDR4 (Arabidopsis thaliana (Mouse-ear cress)).